The primary structure comprises 218 residues: Glutathione S-transferase Mu 2 (218 aa).

The GST N-terminal domain maps to 2-88 (PMTLGYWNIR…YIARKHNLCG (87 aa)). A glutathione-binding site is contributed by 7-8 (YW). A phosphoserine mark is found at Ser27 and Ser44. Residues 43–46 (RSQW), Lys50, 59–60 (NL), and 72–73 (QS) each bind glutathione. A GST C-terminal domain is found at 90–208 (SEKEQIREDI…KSSRFLPRPV (119 aa)). Tyr116 serves as a coordination point for substrate.

The protein belongs to the GST superfamily. Mu family. In terms of assembly, homodimer. In terms of tissue distribution, muscle.

The protein localises to the cytoplasm. It catalyses the reaction RX + glutathione = an S-substituted glutathione + a halide anion + H(+). The catalysed reaction is 11(S)-hydroxy-14(S),15(S)-epoxy-(5Z,8Z,12E)-eicosatrienoate + glutathione = (11S,15S)-dihydroxy-14(R)-S-glutathionyl-(5Z,8Z,12E)-eicosatrienoate. In terms of biological role, conjugation of reduced glutathione to a wide number of exogenous and endogenous hydrophobic electrophiles. Participates in the formation of novel hepoxilin regioisomers. The protein is Glutathione S-transferase Mu 2 of Homo sapiens (Human).